A 326-amino-acid polypeptide reads, in one-letter code: 4-hydroxythreonine-4-phosphate dehydrogenase (326 aa).

Threonine 132 lines the substrate pocket. Residues histidine 160, histidine 205, and histidine 260 each contribute to the a divalent metal cation site. Residues lysine 268, asparagine 277, and arginine 286 each coordinate substrate.

The protein belongs to the PdxA family. Homodimer. Requires Zn(2+) as cofactor. Mg(2+) is required as a cofactor. The cofactor is Co(2+).

It is found in the cytoplasm. It carries out the reaction 4-(phosphooxy)-L-threonine + NAD(+) = 3-amino-2-oxopropyl phosphate + CO2 + NADH. It participates in cofactor biosynthesis; pyridoxine 5'-phosphate biosynthesis; pyridoxine 5'-phosphate from D-erythrose 4-phosphate: step 4/5. In terms of biological role, catalyzes the NAD(P)-dependent oxidation of 4-(phosphooxy)-L-threonine (HTP) into 2-amino-3-oxo-4-(phosphooxy)butyric acid which spontaneously decarboxylates to form 3-amino-2-oxopropyl phosphate (AHAP). This is 4-hydroxythreonine-4-phosphate dehydrogenase from Stenotrophomonas maltophilia (strain R551-3).